Here is a 434-residue protein sequence, read N- to C-terminus: Chemotaxis protein MotC (434 aa).

The first 15 residues, 1-15, serve as a signal peptide directing secretion; the sequence is MLKRLCTILAASALA. The segment at 344–417 is disordered; the sequence is VVRPPLGESP…DPALDGFLAS (74 aa).

The protein localises to the periplasm. Functionally, required for the rotation of the flagellar motor. Might control the energy flux or coupling that drives flagellar rotation. The sequence is that of Chemotaxis protein MotC (motC) from Rhizobium meliloti (strain 1021) (Ensifer meliloti).